The primary structure comprises 405 residues: Putative colanic acid biosynthesis glycosyl transferase WcaC (405 aa).

Its pathway is slime biogenesis; slime polysaccharide biosynthesis. The sequence is that of Putative colanic acid biosynthesis glycosyl transferase WcaC (wcaC) from Escherichia coli (strain K12).